Consider the following 338-residue polypeptide: S-adenosylmethionine:tRNA ribosyltransferase-isomerase (338 aa).

The protein belongs to the QueA family. As to quaternary structure, monomer.

The protein resides in the cytoplasm. It catalyses the reaction 7-aminomethyl-7-carbaguanosine(34) in tRNA + S-adenosyl-L-methionine = epoxyqueuosine(34) in tRNA + adenine + L-methionine + 2 H(+). The protein operates within tRNA modification; tRNA-queuosine biosynthesis. Transfers and isomerizes the ribose moiety from AdoMet to the 7-aminomethyl group of 7-deazaguanine (preQ1-tRNA) to give epoxyqueuosine (oQ-tRNA). In Francisella tularensis subsp. tularensis (strain WY96-3418), this protein is S-adenosylmethionine:tRNA ribosyltransferase-isomerase.